The primary structure comprises 490 residues: MDNKNFQSKTGFNLENTYLTLPNIFFSEQNPKGSKNPKLIKFNTSLAEELGLNEEVLNSDFGLNIFAGNETFPGIVPIAQAYAGHQFGHFTMLGDGRALLLGEHVTKDSKRYDVQLKGSGRTIYSRGGDGKAALAPMLREYIISEGMHGLGIPTTRSLAVVNTGEEVLRERFEQGAILTRIASSHIRVGTFAYAAQWGTLEDLKSLADYTIKRHFPNIAKSENKYILFLEEVINRQAELIVKWQSVGFIHGVMNTDNMVISGETIDYGPCAFMDTYDTNTVFSSIDYAGRYAYGNQPNMALWNLARFSEALLPLLNPNLDEAVNIAKKSISNFSKLYKKYWFNKMRAKLGLFTEKENDELLIEGLLSTMQKYEADFTNTFVSLTLNKFEDEKVFSSDEFKTWYALWQNRLKEENRSQEEVRNLMMNNNPYIIPRNHLVEKALKNAEKGDFTFMDNLLEALKNPYSYSKDLEKYTKLPEKSDTPYVTYCGT.

Gly-94, Gly-96, Arg-97, Lys-117, Asp-129, Gly-130, Arg-180, and Arg-187 together coordinate ATP. Asp-256 acts as the Proton acceptor in catalysis. Mg(2+) is bound by residues Asn-257 and Asp-266. Asp-266 is a binding site for ATP.

The protein belongs to the SELO family. Requires Mg(2+) as cofactor. It depends on Mn(2+) as a cofactor.

The catalysed reaction is L-seryl-[protein] + ATP = 3-O-(5'-adenylyl)-L-seryl-[protein] + diphosphate. It catalyses the reaction L-threonyl-[protein] + ATP = 3-O-(5'-adenylyl)-L-threonyl-[protein] + diphosphate. It carries out the reaction L-tyrosyl-[protein] + ATP = O-(5'-adenylyl)-L-tyrosyl-[protein] + diphosphate. The enzyme catalyses L-histidyl-[protein] + UTP = N(tele)-(5'-uridylyl)-L-histidyl-[protein] + diphosphate. The catalysed reaction is L-seryl-[protein] + UTP = O-(5'-uridylyl)-L-seryl-[protein] + diphosphate. It catalyses the reaction L-tyrosyl-[protein] + UTP = O-(5'-uridylyl)-L-tyrosyl-[protein] + diphosphate. Its function is as follows. Nucleotidyltransferase involved in the post-translational modification of proteins. It can catalyze the addition of adenosine monophosphate (AMP) or uridine monophosphate (UMP) to a protein, resulting in modifications known as AMPylation and UMPylation. In Clostridium perfringens (strain ATCC 13124 / DSM 756 / JCM 1290 / NCIMB 6125 / NCTC 8237 / Type A), this protein is Protein nucleotidyltransferase YdiU.